A 243-amino-acid polypeptide reads, in one-letter code: ATP synthase subunit a (243 aa).

The next 8 membrane-spanning stretches (helical) occupy residues 29 to 49, 54 to 74, 89 to 109, 114 to 134, 141 to 161, 177 to 197, 200 to 220, and 221 to 241; these read NASL…YVGL, VIPN…VSTI, VFTI…PLGF, HIAV…FIGF, FLHI…MVLI, LAAN…FVIN, IFLT…EIFV, and AILQ…DAVN.

Belongs to the ATPase A chain family. F-type ATPases have 2 components, CF(1) - the catalytic core - and CF(0) - the membrane proton channel. CF(1) has five subunits: alpha(3), beta(3), gamma(1), delta(1), epsilon(1). CF(0) has three main subunits: a(1), b(2) and c(9-12). The alpha and beta chains form an alternating ring which encloses part of the gamma chain. CF(1) is attached to CF(0) by a central stalk formed by the gamma and epsilon chains, while a peripheral stalk is formed by the delta and b chains.

The protein resides in the cell inner membrane. Functionally, key component of the proton channel; it plays a direct role in the translocation of protons across the membrane. The chain is ATP synthase subunit a from Ehrlichia ruminantium (strain Welgevonden).